A 452-amino-acid chain; its full sequence is tRNA pseudouridine synthase Pus10 (452 aa).

Residues 71–200 enclose the THUMP domain; the sequence is EMLRALAPSC…DGHVEIQIQP (130 aa). The active-site Nucleophile is Asp-269. Positions 335 and 406 each coordinate substrate.

Belongs to the pseudouridine synthase Pus10 family.

It catalyses the reaction uridine(54) in tRNA = pseudouridine(54) in tRNA. It carries out the reaction uridine(55) in tRNA = pseudouridine(55) in tRNA. Functionally, responsible for synthesis of pseudouridine from uracil-54 and uracil-55 in the psi GC loop of transfer RNAs. The polypeptide is tRNA pseudouridine synthase Pus10 (Methanothrix thermoacetophila (strain DSM 6194 / JCM 14653 / NBRC 101360 / PT) (Methanosaeta thermophila)).